The primary structure comprises 256 residues: 5'-nucleotidase SurE (256 aa).

D9, D10, S42, and N99 together coordinate a divalent metal cation.

Belongs to the SurE nucleotidase family. Requires a divalent metal cation as cofactor.

Its subcellular location is the cytoplasm. The catalysed reaction is a ribonucleoside 5'-phosphate + H2O = a ribonucleoside + phosphate. In terms of biological role, nucleotidase that shows phosphatase activity on nucleoside 5'-monophosphates. The protein is 5'-nucleotidase SurE of Symbiobacterium thermophilum (strain DSM 24528 / JCM 14929 / IAM 14863 / T).